A 416-amino-acid polypeptide reads, in one-letter code: Glutamyl-tRNA reductase (416 aa).

Residues 49–52 (TCNR), serine 105, 110–112 (EPQ), and glutamine 116 each bind substrate. The active-site Nucleophile is cysteine 50. 185-190 (GAGETI) contributes to the NADP(+) binding site.

It belongs to the glutamyl-tRNA reductase family. As to quaternary structure, homodimer.

The enzyme catalyses (S)-4-amino-5-oxopentanoate + tRNA(Glu) + NADP(+) = L-glutamyl-tRNA(Glu) + NADPH + H(+). It participates in porphyrin-containing compound metabolism; protoporphyrin-IX biosynthesis; 5-aminolevulinate from L-glutamyl-tRNA(Glu): step 1/2. Functionally, catalyzes the NADPH-dependent reduction of glutamyl-tRNA(Glu) to glutamate 1-semialdehyde (GSA). The chain is Glutamyl-tRNA reductase from Shewanella halifaxensis (strain HAW-EB4).